The following is a 144-amino-acid chain: Probable low molecular weight protein-tyrosine-phosphatase AmsI (144 aa).

Cysteine 9 acts as the Nucleophile in catalysis. Arginine 15 is an active-site residue. Aspartate 115 (proton donor) is an active-site residue.

It belongs to the low molecular weight phosphotyrosine protein phosphatase family.

The catalysed reaction is O-phospho-L-tyrosyl-[protein] + H2O = L-tyrosyl-[protein] + phosphate. Functionally, may function as a phosphatase required for amylovoran (an exopolysaccharide that functions as a virulence factor) production. This Erwinia amylovora (Fire blight bacteria) protein is Probable low molecular weight protein-tyrosine-phosphatase AmsI (amsI).